Reading from the N-terminus, the 268-residue chain is MTHTTTIAAKRGGLALAKKAAAAGAVALAVASLQPVSAAHAADARVIGGKPAAQNEFPFMVHLSMGCGGALYKKDIVLTAAHCMDGSGNNTRITVTAGVADLNSSGAIKVKSTKVKVAPGYDGVGKDWALIKLAKPIDRPTLKIATTAKYNRGTFTIAGWGDVREGAGTGTTKLQKANVPFVSDRACKWHYGNRLVPKQELCAGYASGGIDTCQGDSGGPMFRKDDAGKWIQVGIVSWGDGCARSGVPGVYTEVSTFAKDIAKAASAL.

The signal sequence occupies residues 1-41 (MTHTTTIAAKRGGLALAKKAAAAGAVALAVASLQPVSAAHA). A propeptide spans 42–45 (ADAR) (activation peptide). In terms of domain architecture, Peptidase S1 spans 46-266 (VIGGKPAAQN…FAKDIAKAAS (221 aa)). An intrachain disulfide couples Cys-67 to Cys-83. Catalysis depends on charge relay system residues His-82 and Asp-127. 2 disulfides stabilise this stretch: Cys-187–Cys-202 and Cys-213–Cys-242. Residue Ser-217 is the Charge relay system of the active site.

It belongs to the peptidase S1 family.

Protease that shows preferential cleavage after Arg and Lys residues. This is Trypsin-like protease from Streptomyces glaucescens.